The sequence spans 237 residues: Germination-specific N-acetylmuramoyl-L-alanine amidase (237 aa).

The signal sequence occupies residues 1-27 (MRKKLKWLSFLLGFIILLFLFKYQFSN). The 184-residue stretch at 43–226 (IYLDPGHGGP…VASSIYKGIL (184 aa)) folds into the MurNAc-LAA domain.

It belongs to the N-acetylmuramoyl-L-alanine amidase 3 family.

Its subcellular location is the secreted. It carries out the reaction Hydrolyzes the link between N-acetylmuramoyl residues and L-amino acid residues in certain cell-wall glycopeptides.. Functionally, cleaves the peptide side chain from the N-acetylmuramic acid residues in peptidoglycan. This is a step in the formation of muramic delta-lactam residues in spore cortex. The protein is Germination-specific N-acetylmuramoyl-L-alanine amidase (cwlD) of Bacillus subtilis (strain 168).